The sequence spans 255 residues: Triosephosphate isomerase (255 aa).

10–12 (NWK) is a binding site for substrate. Histidine 96 (electrophile) is an active-site residue. The active-site Proton acceptor is glutamate 169. Substrate is bound by residues glycine 175, serine 214, and 235-236 (GG).

The protein belongs to the triosephosphate isomerase family. As to quaternary structure, homodimer.

It is found in the cytoplasm. The catalysed reaction is D-glyceraldehyde 3-phosphate = dihydroxyacetone phosphate. It functions in the pathway carbohydrate biosynthesis; gluconeogenesis. The protein operates within carbohydrate degradation; glycolysis; D-glyceraldehyde 3-phosphate from glycerone phosphate: step 1/1. Its function is as follows. Involved in the gluconeogenesis. Catalyzes stereospecifically the conversion of dihydroxyacetone phosphate (DHAP) to D-glyceraldehyde-3-phosphate (G3P). This Coxiella burnetii (strain Dugway 5J108-111) protein is Triosephosphate isomerase.